The following is a 542-amino-acid chain: CTP synthase (542 aa).

The amidoligase domain stretch occupies residues 1-265; the sequence is MARYVFITGG…DSEVLAAFGI (265 aa). Ser-13 lines the CTP pocket. Ser-13 lines the UTP pocket. An ATP-binding site is contributed by 14-19; sequence SLGKGI. Residue Tyr-54 participates in L-glutamine binding. Asp-71 is a binding site for ATP. Asp-71 and Glu-139 together coordinate Mg(2+). CTP is bound by residues 146-148, 186-191, and Lys-222; these read DIE and KTKPTQ. UTP-binding positions include 186-191 and Lys-222; that span reads KTKPTQ. Residues 291-541 enclose the Glutamine amidotransferase type-1 domain; the sequence is TIAIVGKYTG…IAAAVEQSRL (251 aa). Position 353 (Gly-353) interacts with L-glutamine. The Nucleophile; for glutamine hydrolysis role is filled by Cys-380. Residues 381–384, Glu-404, and Arg-469 each bind L-glutamine; that span reads FGMQ. Residues His-514 and Glu-516 contribute to the active site.

This sequence belongs to the CTP synthase family. As to quaternary structure, homotetramer.

The enzyme catalyses UTP + L-glutamine + ATP + H2O = CTP + L-glutamate + ADP + phosphate + 2 H(+). It catalyses the reaction L-glutamine + H2O = L-glutamate + NH4(+). The catalysed reaction is UTP + NH4(+) + ATP = CTP + ADP + phosphate + 2 H(+). The protein operates within pyrimidine metabolism; CTP biosynthesis via de novo pathway; CTP from UDP: step 2/2. With respect to regulation, allosterically activated by GTP, when glutamine is the substrate; GTP has no effect on the reaction when ammonia is the substrate. The allosteric effector GTP functions by stabilizing the protein conformation that binds the tetrahedral intermediate(s) formed during glutamine hydrolysis. Inhibited by the product CTP, via allosteric rather than competitive inhibition. In terms of biological role, catalyzes the ATP-dependent amination of UTP to CTP with either L-glutamine or ammonia as the source of nitrogen. Regulates intracellular CTP levels through interactions with the four ribonucleotide triphosphates. The polypeptide is CTP synthase (Chelativorans sp. (strain BNC1)).